Reading from the N-terminus, the 467-residue chain is Gamma-aminobutyric acid receptor subunit rho-3 (467 aa).

The first 24 residues, Met-1–Ala-24, serve as a signal peptide directing secretion. Over Ser-25–His-266 the chain is Extracellular. 4-aminobutanoate contacts are provided by Arg-111 and Ser-175. Cysteines 184 and 198 form a disulfide. Residue Glu-203 participates in 4-aminobutanoate binding. Asn-220 carries an N-linked (GlcNAc...) asparagine glycan. The helical transmembrane segment at Val-267–Val-287 threads the bilayer. Over Ser-288 to Arg-299 the chain is Cytoplasmic. A helical membrane pass occupies residues Val-300–Ser-320. At Met-321 to Asp-331 the chain is on the extracellular side. The helical transmembrane segment at Val-332–Asn-352 threads the bilayer. Residues Glu-347–Arg-448 form an interaction with SQSTM1 region. The Cytoplasmic segment spans residues Tyr-353–Tyr-446. A helical membrane pass occupies residues Ser-447–Val-467.

The protein belongs to the ligand-gated ion channel (TC 1.A.9) family. Gamma-aminobutyric acid receptor (TC 1.A.9.5) subfamily. GABRR3 sub-subfamily. As to quaternary structure, three rho subunits (rho-1/GBRR1, rho-2/GBRR2 and rho-3/GBRR3) coassemble either to form functional homopentamers or heteropentamers. Forms a ternary complex with SQSTM1 and PRKCZ.

Its subcellular location is the postsynaptic cell membrane. The protein resides in the cell membrane. The catalysed reaction is chloride(in) = chloride(out). With respect to regulation, inhibited by TPMPA, a rho-specific antagonist, when forming a homopentamer. Rho subunit of the pentameric ligand-gated chloride channels responsible for mediating the effects of gamma-aminobutyric acid (GABA), the major inhibitory neurotransmitter in the brain. Rho-containing GABA-gated chloride channels are a subclass of GABA(A) receptors (GABAARs) entirely composed of rho subunits, where GABA molecules bind at the rho intersubunit interfaces. When activated by GABA, rho-GABAARs selectively allow the flow of chloride anions across the cell membrane down their electrochemical gradient. The polypeptide is Gamma-aminobutyric acid receptor subunit rho-3 (Homo sapiens (Human)).